Consider the following 148-residue polypeptide: Large ribosomal subunit protein uL15 (148 aa).

Positions 1–30 are enriched in basic residues; it reads MPSKLRKTRKLRGHVSHGHGRIGKHRKHPG. Positions 1–38 are disordered; the sequence is MPSKLRKTRKLRGHVSHGHGRIGKHRKHPGGRGNAGGM.

Belongs to the universal ribosomal protein uL15 family. In terms of assembly, component of the large ribosomal subunit.

The protein localises to the cytoplasm. In terms of biological role, component of the large ribosomal subunit. The ribosome is a large ribonucleoprotein complex responsible for the synthesis of proteins in the cell. This Xenopus laevis (African clawed frog) protein is Large ribosomal subunit protein uL15 (rpl27a).